A 447-amino-acid polypeptide reads, in one-letter code: MVSERQTWSLLQGGQCNEYTVAYINARIIDPASGTDYKGYLLTRGKEILDFGPGFFDPNGAAFAASEVVDCNGHVLMPGIVDLHVHLREPGGEHKETVDTGSRAAAAGGVTTVVCQPNTIPRLENVLVAKYLKMRALESSCVNIEFYGAVTKSDGELCDMASLKDAGALGFTDDGLPVMNALYMKRAFEYAQDLDVVVAQHAEDCNLSDGGCINEGLVSRELGLKGIPDISESIMVSRDIQLLREVPGAHYHVLHISTKKALDIVRAAKREGLRVTCEVTPHHFLLNESAVLEHGTMAKMNPPLRTEEDRLSMISGLEDGTIDCIATDHAPHAAQEKTRPISCCAFGIVGLETLLPLSLELYHNAGMSLMDVLSKLTSKPAEIVRLPRGKIAKGLVADLVIFDLEHVWTIDTAKFSSKSKNSPFQGRKVKGKVLRTVVSGKTVYRAE.

Residues His-84 and His-86 each coordinate Zn(2+). Substrate-binding positions include 86–88 (HLR) and Asn-118. Zn(2+) contacts are provided by Asp-174, His-201, and His-255. Asn-301 serves as a coordination point for substrate. Residue Asp-328 participates in Zn(2+) binding. Asp-328 is a catalytic residue. Substrate is bound by residues His-332 and 346–347 (FG).

Belongs to the metallo-dependent hydrolases superfamily. DHOase family. Class I DHOase subfamily. Zn(2+) is required as a cofactor.

The catalysed reaction is (S)-dihydroorotate + H2O = N-carbamoyl-L-aspartate + H(+). It participates in pyrimidine metabolism; UMP biosynthesis via de novo pathway; (S)-dihydroorotate from bicarbonate: step 3/3. In terms of biological role, catalyzes the reversible cyclization of carbamoyl aspartate to dihydroorotate. The protein is Dihydroorotase of Anaplasma phagocytophilum (strain HZ).